The chain runs to 135 residues: Ribonuclease P protein component (135 aa).

The protein belongs to the RnpA family. In terms of assembly, consists of a catalytic RNA component (M1 or rnpB) and a protein subunit.

It carries out the reaction Endonucleolytic cleavage of RNA, removing 5'-extranucleotides from tRNA precursor.. In terms of biological role, RNaseP catalyzes the removal of the 5'-leader sequence from pre-tRNA to produce the mature 5'-terminus. It can also cleave other RNA substrates such as 4.5S RNA. The protein component plays an auxiliary but essential role in vivo by binding to the 5'-leader sequence and broadening the substrate specificity of the ribozyme. The polypeptide is Ribonuclease P protein component (Pseudomonas aeruginosa (strain LESB58)).